Here is a 460-residue protein sequence, read N- to C-terminus: MTQEKRSLHKTPPDGGWGWMIVIGCFFVTVCTRAVTRCISIFFVEFQSYFAQDYARTAWIHSIVDCSTMLCAPIGSYVSNHFSCQVGIILGGVLASTGLVLSSFATSLEYLYLTLGVLTGLGFALCYSPAIAMVGKYFEKRKALAYGIAMSGSGIGTFILAPVVQLLIEQFSWRGALLILGGFVSNLCVCGALMRPISLKEDSLHYPLKREPQLDSSCSPLCQDCSHKKLCYCTTKEYHFLLKPKFIILAVSFLFLAYGCSPPFVYLVPYSLSVGVSHQEAAFLMSILGIVDIVGNITFGWVTDRRFLKKHRYCCYLIAVGLDGLCCLFLPILTCFQLLVPFSVMFGYFDGAYVALIPVITGDVVGTSNLSSALGVVFFLHAVPYLLSPPIAGWLVDTTGDYTAAFLLSGFSMIFCSILLGLAKIINRIKKNPQATVVRSSDIKQEVWTNGDVSCLNAIS.

The Cytoplasmic segment spans residues 1–10 (MTQEKRSLHK). A run of 12 helical transmembrane segments spans residues 11-31 (TPPD…VTVC), 58-78 (AWIH…GSYV), 86-106 (VGII…SFAT), 115-135 (LGVL…AMVG), 148-168 (IAMS…QLLI), 177-197 (LLIL…MRPI), 246-266 (FIIL…PFVY), 282-302 (AFLM…FGWV), 329-349 (FLPI…FGYF), 354-374 (VALI…SSAL), 376-396 (VVFF…GWLV), and 406-426 (FLLS…AKII). Residues 427–460 (NRIKKNPQATVVRSSDIKQEVWTNGDVSCLNAIS) lie on the Cytoplasmic side of the membrane.

It belongs to the major facilitator superfamily. Monocarboxylate porter (TC 2.A.1.13) family.

The protein localises to the cell membrane. It localises to the basolateral cell membrane. It carries out the reaction creatine(in) = creatine(out). The catalysed reaction is guanidinoacetate(in) = guanidinoacetate(out). Functions as a transporter for creatine and as well for its precursor guanidinoacetate. Transport of creatine and GAA is independent of resting membrane potential and extracellular Na(+), Cl(-), or pH. Contributes to the process of creatine biosynthesis and distribution. The protein is Monocarboxylate transporter 12 (slc16a12) of Xenopus laevis (African clawed frog).